Here is an 82-residue protein sequence, read N- to C-terminus: RNA-binding protein YbxF (82 aa).

The protein belongs to the eukaryotic ribosomal protein eL8 family.

The sequence is that of RNA-binding protein YbxF from Geobacillus stearothermophilus (Bacillus stearothermophilus).